A 347-amino-acid polypeptide reads, in one-letter code: MNPMIFTSLLATIMLGTSIVLTSSHWFLTWLGFEMNMMAIIPVLMKKYNPRSMEAATKYFLTQATASMILVLAIIINLMYSGQWTIMIMENPTASMLITIALVMKLGLAPFHFWVPEVTQGVSLSSGLILLTWQKIAPLSLLYQIFPSINTNLLLIMSLLSIMIGGWGGLNQTQLRKIMAYSSIAHMGWMIAIMIYNPNLSLLNLLIYIMMTSSMFMLLIINSTTSTSSLSRAWNINPIVVSTMMVILLSLGGLPPLTGFMPKWMIIQELTKNSSVMLPSLMAILALLNLFFYMRLTYSTALTMFPTMNNMKLTWQFQSTNIMPMMMSLISMSMLALPLAPSLITLN.

A run of 11 helical transmembrane segments spans residues 1 to 21 (MNPMIFTSLLATIMLGTSIVL), 25 to 45 (HWFLTWLGFEMNMMAIIPVLM), 68 to 88 (MILVLAIIINLMYSGQWTIMI), 96 to 116 (MLITIALVMKLGLAPFHFWVP), 122 to 142 (VSLSSGLILLTWQKIAPLSLL), 145 to 165 (IFPSINTNLLLIMSLLSIMIG), 178 to 198 (IMAYSSIAHMGWMIAIMIYNP), 201 to 221 (SLLNLLIYIMMTSSMFMLLII), 239 to 259 (IVVSTMMVILLSLGGLPPLTG), 274 to 294 (SSVMLPSLMAILALLNLFFYM), and 326 to 346 (MMSLISMSMLALPLAPSLITL).

This sequence belongs to the complex I subunit 2 family. In terms of assembly, core subunit of respiratory chain NADH dehydrogenase (Complex I) which is composed of 45 different subunits. Interacts with TMEM242.

It localises to the mitochondrion inner membrane. The enzyme catalyses a ubiquinone + NADH + 5 H(+)(in) = a ubiquinol + NAD(+) + 4 H(+)(out). Its function is as follows. Core subunit of the mitochondrial membrane respiratory chain NADH dehydrogenase (Complex I) which catalyzes electron transfer from NADH through the respiratory chain, using ubiquinone as an electron acceptor. Essential for the catalytic activity and assembly of complex I. The sequence is that of NADH-ubiquinone oxidoreductase chain 2 from Sylvisorex lunaris (Moon forest shrew).